The primary structure comprises 411 residues: Chorismate synthase (411 aa).

The NADP(+) site is built by Arg-40 and Arg-46. FMN contacts are provided by residues 135–137 and 256–257; these read RAS and QA. Residues 278 to 299 are disordered; it reads HDGIARGADGRPRRTSDRAGGI. Basic and acidic residues predominate over residues 285-294; it reads ADGRPRRTSD. FMN-binding positions include Ala-301, 316–320, and Arg-342; that span reads KPIAT.

This sequence belongs to the chorismate synthase family. In terms of assembly, homotetramer. FMNH2 is required as a cofactor.

The catalysed reaction is 5-O-(1-carboxyvinyl)-3-phosphoshikimate = chorismate + phosphate. It functions in the pathway metabolic intermediate biosynthesis; chorismate biosynthesis; chorismate from D-erythrose 4-phosphate and phosphoenolpyruvate: step 7/7. Catalyzes the anti-1,4-elimination of the C-3 phosphate and the C-6 proR hydrogen from 5-enolpyruvylshikimate-3-phosphate (EPSP) to yield chorismate, which is the branch point compound that serves as the starting substrate for the three terminal pathways of aromatic amino acid biosynthesis. This reaction introduces a second double bond into the aromatic ring system. The protein is Chorismate synthase of Micrococcus luteus (strain ATCC 4698 / DSM 20030 / JCM 1464 / CCM 169 / CCUG 5858 / IAM 1056 / NBRC 3333 / NCIMB 9278 / NCTC 2665 / VKM Ac-2230) (Micrococcus lysodeikticus).